Consider the following 264-residue polypeptide: Apolipoprotein A-I (264 aa).

An N-terminal signal peptide occupies residues 1 to 18 (MKAVVLAVAVLFLTGSQA). Repeat copies occupy residues 67–88 (LKLL…ADLG) and 89–110 (PVTQ…QEMN). The interval 67-264 (LKLLDNWDTL…DQATKQLTAQ (198 aa)) is 10 X approximate tandem repeats. At Met109 the chain carries Methionine sulfoxide. The stretch at 111–121 (KDLQEVKQKVQ) is one 3; half-length repeat. 5 consecutive repeat copies span residues 122 to 143 (PYLD…EKVG), 144 to 165 (PLGT…EKLT), 166 to 187 (PLGE…TQLA), 188 to 207 (PYSD…LRDS), and 208 to 229 (TTFA…EKAK). A 9; half-length repeat occupies 230–240 (PALEDLRQGLL). Residues 241–264 (PVLESLKASILSSIDQATKQLTAQ) form repeat 10.

It belongs to the apolipoprotein A1/A4/E family. Homodimer. Interacts with APOA1BP and CLU. Component of a sperm activating protein complex (SPAP), consisting of APOA1, an immunoglobulin heavy chain, an immunoglobulin light chain and albumin. Interacts with NDRG1. Interacts with SCGB3A2. Interacts with NAXE and YJEFN3. In terms of processing, glycosylated. Post-translationally, palmitoylated. Phosphorylation sites are present in the extracellular medium.

It is found in the secreted. In terms of biological role, participates in the reverse transport of cholesterol from tissues to the liver for excretion by promoting cholesterol efflux from tissues and by acting as a cofactor for the lecithin cholesterol acyltransferase (LCAT). As part of the SPAP complex, activates spermatozoa motility. The protein is Apolipoprotein A-I (APOA1) of Chinchilla lanigera (Long-tailed chinchilla).